The chain runs to 256 residues: Type III pantothenate kinase (256 aa).

6-13 (DIGNTNIV) contributes to the ATP binding site. Position 107-110 (107-110 (GADI)) interacts with substrate. The Proton acceptor role is filled by Asp-109. Asp-129 lines the K(+) pocket. Thr-132 is a binding site for ATP. Thr-184 contributes to the substrate binding site.

This sequence belongs to the type III pantothenate kinase family. As to quaternary structure, homodimer. It depends on NH4(+) as a cofactor. The cofactor is K(+).

It localises to the cytoplasm. The enzyme catalyses (R)-pantothenate + ATP = (R)-4'-phosphopantothenate + ADP + H(+). Its pathway is cofactor biosynthesis; coenzyme A biosynthesis; CoA from (R)-pantothenate: step 1/5. Catalyzes the phosphorylation of pantothenate (Pan), the first step in CoA biosynthesis. In Bifidobacterium longum (strain DJO10A), this protein is Type III pantothenate kinase.